A 131-amino-acid polypeptide reads, in one-letter code: Profilin-2 (131 aa).

It belongs to the profilin family. Occurs in many kinds of cells as a complex with monomeric actin in a 1:1 ratio.

The protein resides in the cytoplasm. It is found in the cytoskeleton. Functionally, binds to actin and affects the structure of the cytoskeleton. At high concentrations, profilin prevents the polymerization of actin, whereas it enhances it at low concentrations. By binding to PIP2, it inhibits the formation of IP3 and DG. The chain is Profilin-2 from Lilium longiflorum (Trumpet lily).